A 350-amino-acid polypeptide reads, in one-letter code: Mitogen-activated protein kinase HOG1 (350 aa).

Residues 20 to 299 (YTDLQPVGMG…AAQALAHEYL (280 aa)) form the Protein kinase domain. Residues 26-34 (VGMGAFGLV) and K49 contribute to the ATP site. D141 (proton acceptor) is an active-site residue. The short motif at 171 to 173 (TGY) is the TXY element.

Belongs to the protein kinase superfamily. Ser/Thr protein kinase family. MAP kinase subfamily. HOG1 sub-subfamily. Requires Mg(2+) as cofactor.

The protein resides in the cytoplasm. It is found in the nucleus. It catalyses the reaction L-seryl-[protein] + ATP = O-phospho-L-seryl-[protein] + ADP + H(+). The enzyme catalyses L-threonyl-[protein] + ATP = O-phospho-L-threonyl-[protein] + ADP + H(+). In terms of biological role, proline-directed serine/threonine-protein kinase involved in a signal transduction pathway that is activated by changes in the osmolarity of the extracellular environment. Controls osmotic regulation of transcription of target genes. Involved in environmental stress response. Via the downstream MSN2 transcription factor, may play roles in the regulation of growth, conidiation, trap development, fatty acid metabolism and secondary metabolites biosynthesis. This chain is Mitogen-activated protein kinase HOG1, found in Arthrobotrys oligospora (strain ATCC 24927 / CBS 115.81 / DSM 1491) (Nematode-trapping fungus).